The following is a 141-amino-acid chain: Lutropin subunit beta (141 aa).

Residues 1–20 (MEMFQGLLLWLLLGVAGVWA) form the signal peptide. Intrachain disulfides connect Cys-29–Cys-77, Cys-43–Cys-92, Cys-46–Cys-130, Cys-54–Cys-108, Cys-58–Cys-110, and Cys-113–Cys-120. Residue Asn-33 is glycosylated (N-linked (GlcNAc...) asparagine).

Belongs to the glycoprotein hormones subunit beta family. Heterodimer of a common alpha chain and a unique beta chain which confers biological specificity to thyrotropin, lutropin, follitropin and gonadotropin.

Its subcellular location is the secreted. Its function is as follows. Promotes spermatogenesis and ovulation by stimulating the testes and ovaries to synthesize steroids. This chain is Lutropin subunit beta (LHB), found in Bos taurus (Bovine).